Consider the following 349-residue polypeptide: 3-dehydroquinate synthase (349 aa).

NAD(+) is bound by residues 63 to 68 (DGEDYK), 97 to 101 (GVIGD), 121 to 122 (TT), K134, K143, and 161 to 164 (FLQT). Zn(2+)-binding residues include E176, H235, and H252.

It belongs to the sugar phosphate cyclases superfamily. Dehydroquinate synthase family. Requires Co(2+) as cofactor. Zn(2+) is required as a cofactor. The cofactor is NAD(+).

The protein localises to the cytoplasm. The catalysed reaction is 7-phospho-2-dehydro-3-deoxy-D-arabino-heptonate = 3-dehydroquinate + phosphate. It participates in metabolic intermediate biosynthesis; chorismate biosynthesis; chorismate from D-erythrose 4-phosphate and phosphoenolpyruvate: step 2/7. Catalyzes the conversion of 3-deoxy-D-arabino-heptulosonate 7-phosphate (DAHP) to dehydroquinate (DHQ). This is 3-dehydroquinate synthase from Nitratiruptor sp. (strain SB155-2).